Here is a 157-residue protein sequence, read N- to C-terminus: MSSIVDDGISFRPLDIDDFDKGYSECLQQLTEAKFTKEQFIERFNQIKKQSDTYFLIVAVDVKLNKIIACGSLFVEKKFIRNCGKCGHIEDIVVNNNYRGKNLGLRIIEQLKCIGSQAGCYKIILDCSEANVKFYEKCKFERKGVQMSIYLPTPPKL.

Residues isoleucine 9 to leucine 157 enclose the N-acetyltransferase domain. Substrate is bound by residues threonine 31, lysine 78–arginine 81, and glutamate 90–isoleucine 92. Acetyl-CoA is bound at residue glycine 100–leucine 105. Tyrosine 121–lysine 122 contributes to the substrate binding site. Tyrosine 135–lysine 137 lines the acetyl-CoA pocket.

This sequence belongs to the acetyltransferase family. GNA1 subfamily.

It catalyses the reaction D-glucosamine 6-phosphate + acetyl-CoA = N-acetyl-D-glucosamine 6-phosphate + CoA + H(+). It participates in nucleotide-sugar biosynthesis; UDP-N-acetyl-alpha-D-glucosamine biosynthesis; N-acetyl-alpha-D-glucosamine 1-phosphate from alpha-D-glucosamine 6-phosphate (route I): step 1/2. The sequence is that of Glucosamine 6-phosphate N-acetyltransferase 1 (gna1) from Dictyostelium discoideum (Social amoeba).